A 227-amino-acid chain; its full sequence is LysM and putative peptidoglycan-binding domain-containing protein 1 (227 aa).

Residues S23 and S33 each carry the phosphoserine modification. The region spanning 40 to 84 is the LysM domain; the sequence is LEHQLEPGDTLAGLALKYGVTMEQIKRTNRLYTNDSIFLKKTLYI. A disordered region spans residues 95 to 157; sequence NGLDSEEEEN…PSHDLSASDF (63 aa). Residues 98 to 108 show a composition bias toward acidic residues; the sequence is DSEEEENDGEE. S99 is subject to Phosphoserine. The segment covering 143 to 152 has biased composition (polar residues); it reads QGTSTPSHDL. S166, S181, S194, and S212 each carry phosphoserine. The interval 169–227 is disordered; sequence KKAAAQKLRKGESGVPEEDTGLYPSSPRMQQRAVLGPVPLTRTSRTQTLRDQEDEIFKL. Basic and acidic residues predominate over residues 216–227; that stretch reads TLRDQEDEIFKL.

The polypeptide is LysM and putative peptidoglycan-binding domain-containing protein 1 (Lysmd1) (Rattus norvegicus (Rat)).